A 113-amino-acid polypeptide reads, in one-letter code: MNTVRVTFLLVFVLAVSLGQADKDENRMEMQKKTEQGKSYLDFAENLLLQKLEELEAKLLEEDSEESRNSRQKRCIGEGVPCDENDPRCCSGLVCLKPTLHGIWYKSYYCYKK.

Residues 1-21 (MNTVRVTFLLVFVLAVSLGQA) form the signal peptide. The propeptide occupies 22–74 (DKDENRMEMQKKTEQGKSYLDFAENLLLQKLEELEAKLLEEDSEESRNSRQKR). 3 disulfides stabilise this stretch: Cys75–Cys90, Cys82–Cys95, and Cys89–Cys110.

The protein belongs to the neurotoxin 14 (magi-1) family. 01 (HNTX-16) subfamily. Expressed by the venom gland.

Its subcellular location is the secreted. In terms of biological role, probable ion channel inhibitor. The polypeptide is U11-theraphotoxin-Hhn1a (Cyriopagopus hainanus (Chinese bird spider)).